Consider the following 153-residue polypeptide: Arginine repressor (153 aa).

It belongs to the ArgR family.

The protein localises to the cytoplasm. Its pathway is amino-acid biosynthesis; L-arginine biosynthesis [regulation]. Regulates arginine biosynthesis genes. The protein is Arginine repressor of Actinobacillus pleuropneumoniae serotype 3 (strain JL03).